The sequence spans 355 residues: MHC class I-like protein MILL2 (355 aa).

The signal sequence occupies residues 1 to 29 (MKASSGKPREFRPAVLLLILGLLLRDSRG). Residues 46–137 (RLTRTHTLRY…VINQKSQEEG (92 aa)) form an alpha-1 region. 3 disulfides stabilise this stretch: Cys-96–Cys-107, Cys-147–Cys-210, and Cys-249–Cys-306. N-linked (GlcNAc...) asparagine glycosylation is found at Asn-104 and Asn-152. Positions 138 to 229 (LHTLQATLGC…SLRNGLQDTG (92 aa)) are alpha-2. The alpha-3 stretch occupies residues 230-323 (PPMVTVTCRN…SIMQTAVSGH (94 aa)). The Ig-like C1-type domain maps to 231-321 (PMVTVTCRNY…NHSIMQTAVS (91 aa)). Asn-312 carries N-linked (GlcNAc...) asparagine glycosylation. Residues 324–329 (AAEDSQ) are connecting peptide. Asp-330 carries the GPI-anchor amidated aspartate lipid modification. The propeptide at 331–355 (VASSATASAGSALPVVLAVALARAN) is removed in mature form.

This sequence belongs to the MHC class I family. In terms of assembly, heterodimer with B2M (beta-2-microglobulin). N-glycosylated. In terms of tissue distribution, ubiquitously expressed in neonatal and adult tissues.

The protein resides in the cell membrane. In terms of biological role, binds to heparan sulfate proteoglycans on the surface of fibroblast (NIH-3T3) cells. The polypeptide is MHC class I-like protein MILL2 (Mus musculus (Mouse)).